Reading from the N-terminus, the 208-residue chain is Methenyltetrahydrofolate cyclohydrolase (208 aa).

The helical transmembrane segment at 25–46 (GAAAISGAMGAALVSMVCNLTI) threads the bilayer.

This sequence belongs to the cyclodeaminase/cyclohydrolase family. In terms of assembly, homodimer.

It is found in the membrane. The enzyme catalyses (6R)-5,10-methenyltetrahydrofolate + H2O = (6R)-10-formyltetrahydrofolate + H(+). Its pathway is one-carbon metabolism; formaldehyde assimilation via serine pathway. In terms of biological role, required for both C1 and C2 metabolism. This Methylorubrum extorquens (strain ATCC 14718 / DSM 1338 / JCM 2805 / NCIMB 9133 / AM1) (Methylobacterium extorquens) protein is Methenyltetrahydrofolate cyclohydrolase (fchA).